Consider the following 477-residue polypeptide: UDP-N-acetylmuramate--L-alanine ligase (477 aa).

An ATP-binding site is contributed by 112-118 (GAHGKTT).

This sequence belongs to the MurCDEF family.

The protein resides in the cytoplasm. The enzyme catalyses UDP-N-acetyl-alpha-D-muramate + L-alanine + ATP = UDP-N-acetyl-alpha-D-muramoyl-L-alanine + ADP + phosphate + H(+). It functions in the pathway cell wall biogenesis; peptidoglycan biosynthesis. Its function is as follows. Cell wall formation. This is UDP-N-acetylmuramate--L-alanine ligase from Acidovorax ebreus (strain TPSY) (Diaphorobacter sp. (strain TPSY)).